Reading from the N-terminus, the 114-residue chain is Large ribosomal subunit protein bL19 (114 aa).

This sequence belongs to the bacterial ribosomal protein bL19 family.

In terms of biological role, this protein is located at the 30S-50S ribosomal subunit interface and may play a role in the structure and function of the aminoacyl-tRNA binding site. The sequence is that of Large ribosomal subunit protein bL19 from Lactococcus lactis subsp. cremoris (strain MG1363).